The following is a 353-amino-acid chain: Photosystem II protein D1 (353 aa).

An N-acetylthreonine modification is found at Thr-2. The residue at position 2 (Thr-2) is a Phosphothreonine. 3 helical membrane-spanning segments follow: residues 29 to 46 (YIGWFGVLMIPTLLTATS), 118 to 133 (HFLLGVACYMGREWEL), and 142 to 156 (WIAVAYSAPVAAATA). Residue His-118 coordinates chlorophyll a. Tyr-126 is a binding site for pheophytin a. Asp-170 and Glu-189 together coordinate [CaMn4O5] cluster. A helical membrane pass occupies residues 197–218 (FHMLGVAGVFGGSLFSAMHGSL). Chlorophyll a is bound at residue His-198. Residues His-215 and 264–265 (SF) contribute to the a quinone site. His-215 is a binding site for Fe cation. His-272 is a binding site for Fe cation. A helical transmembrane segment spans residues 274–288 (FLAAWPVVGIWFTAL). [CaMn4O5] cluster contacts are provided by His-332, Glu-333, Asp-342, and Ala-344. Positions 345–353 (AIEAPATNG) are excised as a propeptide.

The protein belongs to the reaction center PufL/M/PsbA/D family. As to quaternary structure, PSII is composed of 1 copy each of membrane proteins PsbA, PsbB, PsbC, PsbD, PsbE, PsbF, PsbH, PsbI, PsbJ, PsbK, PsbL, PsbM, PsbT, PsbX, PsbY, PsbZ, Psb30/Ycf12, at least 3 peripheral proteins of the oxygen-evolving complex and a large number of cofactors. It forms dimeric complexes. The cofactor is The D1/D2 heterodimer binds P680, chlorophylls that are the primary electron donor of PSII, and subsequent electron acceptors. It shares a non-heme iron and each subunit binds pheophytin, quinone, additional chlorophylls, carotenoids and lipids. D1 provides most of the ligands for the Mn4-Ca-O5 cluster of the oxygen-evolving complex (OEC). There is also a Cl(-1) ion associated with D1 and D2, which is required for oxygen evolution. The PSII complex binds additional chlorophylls, carotenoids and specific lipids.. Post-translationally, tyr-161 forms a radical intermediate that is referred to as redox-active TyrZ, YZ or Y-Z. In terms of processing, C-terminally processed by CTPA; processing is essential to allow assembly of the oxygen-evolving complex and thus photosynthetic growth.

It is found in the plastid membrane. It catalyses the reaction 2 a plastoquinone + 4 hnu + 2 H2O = 2 a plastoquinol + O2. Functionally, photosystem II (PSII) is a light-driven water:plastoquinone oxidoreductase that uses light energy to abstract electrons from H(2)O, generating O(2) and a proton gradient subsequently used for ATP formation. It consists of a core antenna complex that captures photons, and an electron transfer chain that converts photonic excitation into a charge separation. The D1/D2 (PsbA/PsbD) reaction center heterodimer binds P680, the primary electron donor of PSII as well as several subsequent electron acceptors. In Cuscuta reflexa (Southern Asian dodder), this protein is Photosystem II protein D1.